A 535-amino-acid chain; its full sequence is CTP synthase (535 aa).

In terms of domain architecture, Glutamine amidotransferase type-1 spans 300–535 (RIGIVGKYAP…LVSASYERSK (236 aa)). Catalysis depends on for GATase activity residues Cys-385, His-509, and Glu-511.

It belongs to the CTP synthase family.

It carries out the reaction UTP + L-glutamine + ATP + H2O = CTP + L-glutamate + ADP + phosphate + 2 H(+). It participates in pyrimidine metabolism; CTP biosynthesis via de novo pathway; CTP from UDP: step 2/2. Its function is as follows. Catalyzes the ATP-dependent amination of UTP to CTP with either L-glutamine or ammonia as the source of nitrogen. The polypeptide is CTP synthase (Encephalitozoon cuniculi (strain GB-M1) (Microsporidian parasite)).